The primary structure comprises 298 residues: ATP synthase F(1) complex subunit gamma, mitochondrial (298 aa).

The N-terminal 25 residues, 1–25, are a transit peptide targeting the mitochondrion; sequence MFSRASVVGLSACAVQPQWIQVRNM. Lys39 is subject to N6-acetyllysine. An N6-succinyllysine modification is found at Lys49. An N6-acetyllysine modification is found at Lys55. Residue Lys115 is modified to N6-acetyllysine; alternate. Lys115 carries the N6-succinyllysine; alternate modification. Position 138 is an N6-acetyllysine (Lys138). Ser146 carries the phosphoserine modification. Lys154 bears the N6-acetyllysine; alternate mark. Lys154 carries the N6-succinyllysine; alternate modification. An N6-acetyllysine modification is found at Lys197. The residue at position 270 (Lys270) is an N6-succinyllysine.

The protein belongs to the ATPase gamma chain family. Component of the ATP synthase complex composed at least of ATP5F1A/subunit alpha, ATP5F1B/subunit beta, ATP5MC1/subunit c (homooctomer), MT-ATP6/subunit a, MT-ATP8/subunit 8, ATP5ME/subunit e, ATP5MF/subunit f, ATP5MG/subunit g, ATP5MK/subunit k, ATP5MJ/subunit j, ATP5F1C/subunit gamma, ATP5F1D/subunit delta, ATP5F1E/subunit epsilon, ATP5PF/subunit F6, ATP5PB/subunit b, ATP5PD/subunit d, ATP5PO/subunit OSCP. ATP synthase complex consists of a soluble F(1) head domain (subunits alpha(3) and beta(3)) - the catalytic core - and a membrane F(0) domain - the membrane proton channel (subunits c, a, 8, e, f, g, k and j). These two domains are linked by a central stalk (subunits gamma, delta, and epsilon) rotating inside the F1 region and a stationary peripheral stalk (subunits F6, b, d, and OSCP). Interacts with FLVCR2; this interaction occurs in the absence of heme and is disrupted upon heme binding.

The protein resides in the mitochondrion inner membrane. Its function is as follows. Subunit gamma, of the mitochondrial membrane ATP synthase complex (F(1)F(0) ATP synthase or Complex V) that produces ATP from ADP in the presence of a proton gradient across the membrane which is generated by electron transport complexes of the respiratory chain. ATP synthase complex consist of a soluble F(1) head domain - the catalytic core - and a membrane F(1) domain - the membrane proton channel. These two domains are linked by a central stalk rotating inside the F(1) region and a stationary peripheral stalk. During catalysis, ATP synthesis in the catalytic domain of F(1) is coupled via a rotary mechanism of the central stalk subunits to proton translocation. In vivo, can only synthesize ATP although its ATP hydrolase activity can be activated artificially in vitro. With the central stalk subunit delta, is essential for the biogenesis of F(1) catalytic part of the ATP synthase complex namely in the formation of F1 assembly intermediate. In Mus musculus (Mouse), this protein is ATP synthase F(1) complex subunit gamma, mitochondrial.